The following is a 221-amino-acid chain: Large ribosomal subunit protein uL4 (221 aa).

Residues 45-100 (ARQGTHKTKNRGEVSGAGRKPFKQKGTGRARQGSIRAPQMTGGGIVHGPTPRDYSQ) are disordered.

This sequence belongs to the universal ribosomal protein uL4 family. Part of the 50S ribosomal subunit.

Functionally, one of the primary rRNA binding proteins, this protein initially binds near the 5'-end of the 23S rRNA. It is important during the early stages of 50S assembly. It makes multiple contacts with different domains of the 23S rRNA in the assembled 50S subunit and ribosome. In terms of biological role, forms part of the polypeptide exit tunnel. The protein is Large ribosomal subunit protein uL4 of Leifsonia xyli subsp. xyli (strain CTCB07).